The primary structure comprises 101 residues: Urease subunit beta (101 aa).

This sequence belongs to the urease beta subunit family. Heterotrimer of UreA (gamma), UreB (beta) and UreC (alpha) subunits. Three heterotrimers associate to form the active enzyme.

The protein localises to the cytoplasm. It catalyses the reaction urea + 2 H2O + H(+) = hydrogencarbonate + 2 NH4(+). It participates in nitrogen metabolism; urea degradation; CO(2) and NH(3) from urea (urease route): step 1/1. This chain is Urease subunit beta, found in Cereibacter sphaeroides (strain ATCC 17029 / ATH 2.4.9) (Rhodobacter sphaeroides).